The primary structure comprises 161 residues: SsrA-binding protein (161 aa).

Over residues 139–153 (RESIKRKEENRELDR) the composition is skewed to basic and acidic residues. The segment at 139-161 (RESIKRKEENRELDRLRKRRRQE) is disordered.

The protein belongs to the SmpB family.

The protein resides in the cytoplasm. In terms of biological role, required for rescue of stalled ribosomes mediated by trans-translation. Binds to transfer-messenger RNA (tmRNA), required for stable association of tmRNA with ribosomes. tmRNA and SmpB together mimic tRNA shape, replacing the anticodon stem-loop with SmpB. tmRNA is encoded by the ssrA gene; the 2 termini fold to resemble tRNA(Ala) and it encodes a 'tag peptide', a short internal open reading frame. During trans-translation Ala-aminoacylated tmRNA acts like a tRNA, entering the A-site of stalled ribosomes, displacing the stalled mRNA. The ribosome then switches to translate the ORF on the tmRNA; the nascent peptide is terminated with the 'tag peptide' encoded by the tmRNA and targeted for degradation. The ribosome is freed to recommence translation, which seems to be the essential function of trans-translation. The chain is SsrA-binding protein from Syntrophobacter fumaroxidans (strain DSM 10017 / MPOB).